The sequence spans 692 residues: Potassium-transporting ATPase ATP-binding subunit (692 aa).

4 consecutive transmembrane segments (helical) span residues 50–70 (PIMFVVEIGFVITFILSFLPS), 74–94 (SIPGWFNITVSLILLFTVLFA), 240–260 (LTLIFLIVVVTLPIFTNYLGF), and 266–286 (VLVALLVCLIPTTIGGLLSAI). The active-site 4-aspartylphosphate intermediate is Asp-319. ATP is bound by residues Asp-356, Glu-360, 388 to 395 (FKAETRMS), and Lys-407. Asp-530 and Asp-534 together coordinate Mg(2+). The next 3 helical transmembrane spans lie at 600 to 620 (FAIIPAMFTLAIPQMEALNIM), 628 to 648 (AILSALLFNAVIIPLLIPLAM), and 672 to 692 (GGVIVPFIGIKIIDMIVGLFI).

The protein belongs to the cation transport ATPase (P-type) (TC 3.A.3) family. Type IA subfamily. In terms of assembly, the system is composed of three essential subunits: KdpA, KdpB and KdpC.

It is found in the cell membrane. The catalysed reaction is K(+)(out) + ATP + H2O = K(+)(in) + ADP + phosphate + H(+). Functionally, part of the high-affinity ATP-driven potassium transport (or Kdp) system, which catalyzes the hydrolysis of ATP coupled with the electrogenic transport of potassium into the cytoplasm. This subunit is responsible for energy coupling to the transport system and for the release of the potassium ions to the cytoplasm. In Bacillus thuringiensis (strain Al Hakam), this protein is Potassium-transporting ATPase ATP-binding subunit.